Here is a 696-residue protein sequence, read N- to C-terminus: SEC14 domain and spectrin repeat-containing protein 1 (696 aa).

The region spanning 1–153 is the CRAL-TRIO domain; the sequence is MDATVILPIL…EFGGSLTYDH (153 aa). Spectrin repeat units follow at residues 272–378, 381–494, and 500–602; these read TQLD…NLLQ, LDFH…LKML, and FKCE…HRLE.

Belongs to the SOLO family.

Its function is as follows. May act as the primary docking protein directing membrane turnover and assembly of the transient receptor potential channels trpc4 and trpc5. Binds phospholipids. The sequence is that of SEC14 domain and spectrin repeat-containing protein 1 (sestd1) from Xenopus tropicalis (Western clawed frog).